A 259-amino-acid chain; its full sequence is Proliferating cell nuclear antigen (259 aa).

Residues 61–80 (RCDRNIALGVNLTSLTKVLR) mediate DNA binding. Residue K164 forms a Glycyl lysine isopeptide (Lys-Gly) (interchain with G-Cter in SUMO); alternate linkage. K164 participates in a covalent cross-link: Glycyl lysine isopeptide (Lys-Gly) (interchain with G-Cter in ubiquitin); alternate.

This sequence belongs to the PCNA family. In terms of assembly, homotrimer. In terms of processing, monoubiquitinated on Lys-164 upon DNA damage, and then polyubiquitinated through 'Lys-63'-linkage.

The protein resides in the nucleus. This protein is an auxiliary protein of DNA polymerase delta and is involved in the control of eukaryotic DNA replication by increasing the polymerase's processibility during elongation of the leading strand. Involved in DNA repair. This is Proliferating cell nuclear antigen from Chaetomium thermophilum (strain DSM 1495 / CBS 144.50 / IMI 039719) (Thermochaetoides thermophila).